The following is a 499-amino-acid chain: Glycerol kinase (499 aa).

T13 provides a ligand contact to ADP. 3 residues coordinate ATP: T13, T14, and S15. T13 is a sn-glycerol 3-phosphate binding site. Residue R17 participates in ADP binding. Sn-glycerol 3-phosphate is bound by residues R83, E84, Y135, and D245. Positions 83, 84, 135, 245, and 246 each coordinate glycerol. 2 residues coordinate ADP: T267 and G310. ATP is bound by residues T267, G310, Q314, and G411. Positions 411 and 415 each coordinate ADP.

It belongs to the FGGY kinase family.

It carries out the reaction glycerol + ATP = sn-glycerol 3-phosphate + ADP + H(+). It participates in polyol metabolism; glycerol degradation via glycerol kinase pathway; sn-glycerol 3-phosphate from glycerol: step 1/1. Inhibited by fructose 1,6-bisphosphate (FBP). Key enzyme in the regulation of glycerol uptake and metabolism. Catalyzes the phosphorylation of glycerol to yield sn-glycerol 3-phosphate. The protein is Glycerol kinase of Stenotrophomonas maltophilia (strain R551-3).